We begin with the raw amino-acid sequence, 119 residues long: Phosphoribosyl-AMP cyclohydrolase (119 aa).

Asp77 provides a ligand contact to Mg(2+). A Zn(2+)-binding site is contributed by Cys78. Residues Asp79 and Asp81 each contribute to the Mg(2+) site. Zn(2+) is bound by residues Cys94 and Cys101.

The protein belongs to the PRA-CH family. As to quaternary structure, homodimer. Mg(2+) serves as cofactor. It depends on Zn(2+) as a cofactor.

It localises to the cytoplasm. It carries out the reaction 1-(5-phospho-beta-D-ribosyl)-5'-AMP + H2O = 1-(5-phospho-beta-D-ribosyl)-5-[(5-phospho-beta-D-ribosylamino)methylideneamino]imidazole-4-carboxamide. It participates in amino-acid biosynthesis; L-histidine biosynthesis; L-histidine from 5-phospho-alpha-D-ribose 1-diphosphate: step 3/9. Catalyzes the hydrolysis of the adenine ring of phosphoribosyl-AMP. This is Phosphoribosyl-AMP cyclohydrolase from Cereibacter sphaeroides (strain ATCC 17025 / ATH 2.4.3) (Rhodobacter sphaeroides).